Reading from the N-terminus, the 481-residue chain is Lincomycin resistance protein (481 aa).

14 consecutive transmembrane segments (helical) span residues tryptophan 30–valine 50, glutamine 67–glycine 87, leucine 99–leucine 119, phenylalanine 127–serine 147, valine 162–serine 182, tryptophan 185–valine 205, proline 215–valine 235, leucine 245–valine 265, leucine 285–leucine 305, isoleucine 318–valine 338, glycine 340–proline 360, leucine 374–alanine 394, leucine 421–glycine 441, and phenylalanine 446–alanine 466.

It belongs to the major facilitator superfamily. TCR/Tet family.

It localises to the cell membrane. Functionally, proton-dependent transporter. May mediate the efflux of lincomycin. The chain is Lincomycin resistance protein (lmrA) from Streptomyces lincolnensis.